Consider the following 169-residue polypeptide: Small ribosomal subunit protein uS5c (169 aa).

In terms of domain architecture, S5 DRBM spans 17-80; it reads WQERVVQIRR…ADGKKHVVEV (64 aa).

Belongs to the universal ribosomal protein uS5 family. Part of the 30S ribosomal subunit. Contacts protein S4.

The protein resides in the plastid. It is found in the cyanelle. With S4 and S12 plays an important role in translational accuracy. This Cyanophora paradoxa protein is Small ribosomal subunit protein uS5c (rps5).